The primary structure comprises 234 residues: Small ribosomal subunit protein uS3 (234 aa).

Residues 39–107 enclose the KH type-2 domain; sequence IRKFLKKELY…EVSINIKEVK (69 aa).

The protein belongs to the universal ribosomal protein uS3 family. In terms of assembly, part of the 30S ribosomal subunit. Forms a tight complex with proteins S10 and S14.

Its function is as follows. Binds the lower part of the 30S subunit head. Binds mRNA in the 70S ribosome, positioning it for translation. This chain is Small ribosomal subunit protein uS3, found in Helicobacter pylori (strain J99 / ATCC 700824) (Campylobacter pylori J99).